The primary structure comprises 536 residues: MLVLFETSVGYAIFKVLNEKKLQEVDSLWKEFETPEKANKIVKLKHFEKFQDTAEALAAFTALMEGKINKQLKKVLKKIVKEAHEPLAVADAKLGGVIKEKLNLSCIHSPVVNELMRGIRSQMDGLIPGVEPREMAAMCLGLAHSLSRYRLKFSADKVDTMIVQAISLLDDLDKELNNYIMRCREWYGWHFPELGKIISDNLTYCKCLQKVGDRKNYASASLSEFLSEEVEAEVKAAAEISMGTEVSEEDICNILHLCTQVIEISEYRTQLYEYLQNRMMAIAPNVTVMVGELVGARLIAHAGSLLNLAKHAASTVQILGAEKALFRALKSRRDTPKYGLIYHASLVGQSSPKHKGKISRMLAAKTVLAIRYDAFGEDSSSAMGIENRAKLEARLRILEDRGIRKISGTGKALAKAEKYEHKSEVKTYDPSGDSTLPTCSKKRKIEEVDKEDEITEKKAKKAKIKIKAEVEEEMEEEEAEEEQVVEEEPTVKKKKKKDKKKHIKEEPLSEEEPCTSTAVPSPEKKKKKKKKKDAED.

Position 34 is a phosphothreonine (threonine 34). A Phosphoserine modification is found at serine 109. Lysine 157 participates in a covalent cross-link: Glycyl lysine isopeptide (Lys-Gly) (interchain with G-Cter in SUMO2). Positions 282–400 (IAPNVTVMVG…LEARLRILED (119 aa)) constitute a Nop domain. Phosphoserine occurs at positions 304 and 351. Glycyl lysine isopeptide (Lys-Gly) (interchain with G-Cter in SUMO2) cross-links involve residues lysine 353, lysine 411, lysine 415, lysine 422, lysine 426, lysine 441, lysine 444, and lysine 465. The span at 414 to 427 (AKAEKYEHKSEVKT) shows a compositional bias: basic and acidic residues. The segment at 414 to 440 (AKAEKYEHKSEVKTYDPSGDSTLPTCS) is disordered. Lysine 467 participates in a covalent cross-link: Glycyl lysine isopeptide (Lys-Gly) (interchain with G-Cter in SUMO); alternate. Lysine 467 participates in a covalent cross-link: Glycyl lysine isopeptide (Lys-Gly) (interchain with G-Cter in SUMO1); alternate. Lysine 467 is covalently cross-linked (Glycyl lysine isopeptide (Lys-Gly) (interchain with G-Cter in SUMO2); alternate). Acidic residues predominate over residues 470-488 (VEEEMEEEEAEEEQVVEEE). The disordered stretch occupies residues 470–536 (VEEEMEEEEA…KKKKKKDAED (67 aa)). Lysine 492 is covalently cross-linked (Glycyl lysine isopeptide (Lys-Gly) (interchain with G-Cter in SUMO2)). Positions 492–502 (KKKKKKDKKKH) are enriched in basic residues. Residue lysine 504 forms a Glycyl lysine isopeptide (Lys-Gly) (interchain with G-Cter in SUMO); alternate linkage. Lysine 504 is covalently cross-linked (Glycyl lysine isopeptide (Lys-Gly) (interchain with G-Cter in SUMO2); alternate). Residues serine 509 and serine 521 each carry the phosphoserine modification. Residues 524 to 536 (KKKKKKKKKDAED) are compositionally biased toward basic residues.

This sequence belongs to the NOP5/NOP56 family. Core component of box C/D small nucleolar ribonucleoprotein (snoRNP) particles; the core proteins SNU13, NOP56, NOP58 and FBL or FBLL1 assemble stepwise onto the snoRNA. Interacts with NOLC1/Nopp140. Interacts with NOPCHAP1, NUFIP1, RUVBL1 and RUVBL2; NOPCHAP1 bridges the association of NOP58 with RUVBL1:RUVBL2 and NUFIP1. Interacts with PIH1D1. Part of the small subunit (SSU) processome, composed of more than 70 proteins and the RNA chaperone small nucleolar RNA (snoRNA) U3. In terms of processing, sumoylation is essential for high-affinity binding to snoRNAs.

It is found in the nucleus. The protein localises to the nucleolus. It localises to the nucleoplasm. In terms of biological role, required for the biogenesis of box C/D snoRNAs such as U3, U8 and U14 snoRNAs. Part of the small subunit (SSU) processome, first precursor of the small eukaryotic ribosomal subunit. During the assembly of the SSU processome in the nucleolus, many ribosome biogenesis factors, an RNA chaperone and ribosomal proteins associate with the nascent pre-rRNA and work in concert to generate RNA folding, modifications, rearrangements and cleavage as well as targeted degradation of pre-ribosomal RNA by the RNA exosome. Core component of box C/D small nucleolar ribonucleoprotein (snoRNP) complexes that function in methylation of multiple sites on ribosomal RNAs (rRNAs) and messenger RNAs (mRNAs). The sequence is that of Nucleolar protein 58 (Nop58) from Mus musculus (Mouse).